A 97-amino-acid polypeptide reads, in one-letter code: YcgL domain-containing protein PSPTO_3921 (97 aa).

The YcgL domain occupies 3–87; that stretch reads RICSIYRSPK…AEDEYIEHLP (85 aa).

The chain is YcgL domain-containing protein PSPTO_3921 from Pseudomonas syringae pv. tomato (strain ATCC BAA-871 / DC3000).